Reading from the N-terminus, the 311-residue chain is Pyrimidine-specific ribonucleoside hydrolase RihA (311 aa).

Residue His240 is part of the active site.

Belongs to the IUNH family. RihA subfamily.

Its function is as follows. Hydrolyzes with equal efficiency cytidine or uridine to ribose and cytosine or uracil, respectively. The chain is Pyrimidine-specific ribonucleoside hydrolase RihA from Escherichia coli O17:K52:H18 (strain UMN026 / ExPEC).